The sequence spans 149 residues: 3-dehydroquinate dehydratase (149 aa).

The Proton acceptor role is filled by Tyr-26. Residues Asn-77, His-83, and Asp-90 each contribute to the substrate site. His-103 functions as the Proton donor in the catalytic mechanism. Residues 104-105 and Arg-114 contribute to the substrate site; that span reads LS.

This sequence belongs to the type-II 3-dehydroquinase family. In terms of assembly, homododecamer.

It carries out the reaction 3-dehydroquinate = 3-dehydroshikimate + H2O. It participates in metabolic intermediate biosynthesis; chorismate biosynthesis; chorismate from D-erythrose 4-phosphate and phosphoenolpyruvate: step 3/7. In terms of biological role, catalyzes a trans-dehydration via an enolate intermediate. The protein is 3-dehydroquinate dehydratase of Aliivibrio salmonicida (strain LFI1238) (Vibrio salmonicida (strain LFI1238)).